The sequence spans 478 residues: RNA pseudouridine synthase 3, mitochondrial (478 aa).

Residues 1–20 (MWKAKTCFRQIYLTVLIRRY) constitute a mitochondrion transit peptide. Residues 92 to 162 (EEIYDKAIQT…MRISKRYDTI (71 aa)) form the S4 RNA-binding domain. Asp-232 is an active-site residue.

Belongs to the pseudouridine synthase RluA family.

It localises to the mitochondrion. The enzyme catalyses a uridine in RNA = a pseudouridine in RNA. In Arabidopsis thaliana (Mouse-ear cress), this protein is RNA pseudouridine synthase 3, mitochondrial.